The sequence spans 457 residues: Proton-translocating ferredoxin:NAD(+) oxidoreductase complex subunit C (457 aa).

4Fe-4S ferredoxin-type domains are found at residues Thr353–Ile386 and Ala396–Tyr427. 8 residues coordinate [4Fe-4S] cluster: Cys365, Cys368, Cys371, Cys375, Cys405, Cys408, Cys411, and Cys415. The disordered stretch occupies residues Arg433–Lys457.

Belongs to the 4Fe4S bacterial-type ferredoxin family. RnfC subfamily. In terms of assembly, the complex is composed of six subunits: RnfA, RnfB, RnfC, RnfD, RnfE and RnfG. [4Fe-4S] cluster is required as a cofactor.

It localises to the cell membrane. In terms of biological role, part of a membrane-bound complex that couples electron transfer with translocation of ions across the membrane. Couples electron transfer from reduced ferredoxin to NAD(+) with translocation of H(+) out of the cell. Essential for energy conservation during autotrophic growth. Contributes to ATP synthesis during heterotrophic growth. In Clostridium ljungdahlii (strain ATCC 55383 / DSM 13528 / PETC), this protein is Proton-translocating ferredoxin:NAD(+) oxidoreductase complex subunit C.